The following is a 389-amino-acid chain: Large envelope protein (389 aa).

Met1 carries the post-translational modification N-acetylmethionine. The N-myristoyl glycine; by host moiety is linked to residue Gly2. Residues 2-108 (GQNLSTSNPL…PPLRTTHPQA (107 aa)) form a pre-S1 region. The tract at residues 2-163 (GQNLSTSNPL…FSRIGDPALN (162 aa)) is pre-S. Over 2 to 170 (GQNLSTSNPL…ALNMENITSG (169 aa)) the chain is Virion surface; in external conformation. At 2 to 242 (GQNLSTSNPL…PGYRWMCLRR (241 aa)) the chain is on the intravirion; in internal conformation side. The segment at 76-102 (TLPANPPPASTNRQSGRQPTPLSPPLR) is disordered. The span at 85-95 (STNRQSGRQPT) shows a compositional bias: polar residues. Residues 109-163 (MHWNSTTFHQTLQDPRVRGLYFPAGGSSSGTVNPVPTTTSPISSIFSRIGDPALN) form a pre-S2 region. A helical transmembrane segment spans residues 171 to 191 (FLGPLLVLQAGFFLLTRILTI). The Intravirion; in external conformation portion of the chain corresponds to 192-242 (PQSLDSWWTSLNFLGGTTVCLGQNSQSPISNHSPTSCPPTCPGYRWMCLRR). The helical transmembrane segment at 243–263 (FIIFLFILLLCLIFLLVLLDY) threads the bilayer. Over 264 to 337 (QGMLPVCPLI…WASARFSWLS (74 aa)) the chain is Virion surface. A glycan (N-linked (GlcNAc...) asparagine; by host) is linked at Asn309. Residues 338-358 (LLVPFVQWFVGLSPIVWLSVI) form a helical membrane-spanning segment. At 359–364 (WMMWYW) the chain is on the intravirion side. The helical transmembrane segment at 365-387 (GPSLYSILSPFLPLLPIFFCLWA) threads the bilayer. The Virion surface segment spans residues 388–389 (YI).

This sequence belongs to the orthohepadnavirus major surface antigen family. As to quaternary structure, in its internal form (Li-HBsAg), interacts with the capsid protein and with the isoform S. Interacts with host chaperone CANX. Associates with host chaperone CANX through its pre-S2 N glycan; this association may be essential for isoform M proper secretion. In terms of assembly, interacts with isoform L. Interacts with the antigens of satellite virus HDV (HDVAgs); this interaction is required for encapsidation of HDV genomic RNA. In terms of processing, isoform M is N-terminally acetylated by host at a ratio of 90%, and N-glycosylated by host at the pre-S2 region. Post-translationally, myristoylated.

It is found in the virion membrane. Functionally, the large envelope protein exists in two topological conformations, one which is termed 'external' or Le-HBsAg and the other 'internal' or Li-HBsAg. In its external conformation the protein attaches the virus to cell receptors and thereby initiating infection. This interaction determines the species specificity and liver tropism. This attachment induces virion internalization predominantly through caveolin-mediated endocytosis. The large envelope protein also assures fusion between virion membrane and endosomal membrane. In its internal conformation the protein plays a role in virion morphogenesis and mediates the contact with the nucleocapsid like a matrix protein. Its function is as follows. The middle envelope protein plays an important role in the budding of the virion. It is involved in the induction of budding in a nucleocapsid independent way. In this process the majority of envelope proteins bud to form subviral lipoprotein particles of 22 nm of diameter that do not contain a nucleocapsid. The protein is Large envelope protein of Hepatitis B virus genotype D subtype adw (isolate United Kingdom/adyw/1979) (HBV-D).